The sequence spans 524 residues: Cytochrome P450 4F3 (524 aa).

Residues 19 to 39 (WLLLLLAGASCLLAYILTPIY) traverse the membrane as a helical segment. Cys-468 serves as a coordination point for heme.

The protein belongs to the cytochrome P450 family. The cofactor is heme. In terms of tissue distribution, highest level in polymorphonuclear leukocytes and dendritic cells. Detectable in lymph nodes, spleen, bone marrow and peripheral blood. Highly expressed in ovary. Very low level in liver, kidney, and smooth muscle. Expressed in neutrophils (at protein level).

It localises to the endoplasmic reticulum membrane. Its subcellular location is the microsome membrane. The enzyme catalyses leukotriene B4 + reduced [NADPH--hemoprotein reductase] + O2 = 18-hydroxy-leukotriene B4 + oxidized [NADPH--hemoprotein reductase] + H2O + H(+). It catalyses the reaction leukotriene B4 + reduced [NADPH--hemoprotein reductase] + O2 = 19-hydroxy-leukotriene B4 + oxidized [NADPH--hemoprotein reductase] + H2O + H(+). It participates in lipid metabolism; leukotriene B4 degradation. Functionally, a cytochrome P450 monooxygenase involved in the metabolism of the pro-inflammatory lipid mediator leukotriene B4 (LTB4). Hydroxylates at the omega-1 and omega-2 positions LTB4. This oxidation step leads to LTB4 inactivation, which is postulated to be a crucial part of the resolution of inflammation. Mechanistically, uses molecular oxygen inserting one oxygen atom into a substrate, and reducing the second into a water molecule, with two electrons provided by NADPH via cytochrome P450 reductase (CPR; NADPH-ferrihemoprotein reductase). The polypeptide is Cytochrome P450 4F3 (Mus musculus (Mouse)).